Reading from the N-terminus, the 413-residue chain is uncharacterized protein (413 aa).

Transmembrane regions (helical) follow at residues 10–32 (GLTIHLSLFLLSLLYALNAGRLP), 162–184 (VFLHTGLIHVLVVSGLHVGLVFL), 189–211 (LLPRFYGEVLGLVGVLFYSAFLV), 232–254 (LSFRRYCSLCVLFFTGTLMLFFF), 259–276 (YSYSFWLSFFAVLYILLV), 288–310 (ALMVSLGAFTGTAPLIASFSFVT), and 325–347 (FAYALFGVLSLLTLFSFPPSLIL).

Its subcellular location is the cell membrane. This is an uncharacterized protein from Aquifex aeolicus (strain VF5).